Reading from the N-terminus, the 185-residue chain is ATP-dependent protease subunit HslV (185 aa).

Residue threonine 12 is part of the active site. The Na(+) site is built by alanine 168, cysteine 171, and threonine 174.

It belongs to the peptidase T1B family. HslV subfamily. In terms of assembly, a double ring-shaped homohexamer of HslV is capped on each side by a ring-shaped HslU homohexamer. The assembly of the HslU/HslV complex is dependent on binding of ATP.

Its subcellular location is the cytoplasm. The catalysed reaction is ATP-dependent cleavage of peptide bonds with broad specificity.. Allosterically activated by HslU binding. In terms of biological role, protease subunit of a proteasome-like degradation complex believed to be a general protein degrading machinery. In Cereibacter sphaeroides (strain KD131 / KCTC 12085) (Rhodobacter sphaeroides), this protein is ATP-dependent protease subunit HslV.